The sequence spans 673 residues: Kinesin-like protein KIFC1 (673 aa).

S6, S26, S31, and S33 each carry phosphoserine. 2 disordered regions span residues 23–94 and 109–136; these read KAPS…TGPR and VPAVPVQKSGTSGVPPMAGGKKPSKRPA. Residues 60–86 show a composition bias toward polar residues; the sequence is TKITTSHPRVPSLTTVPQTQGQTTAQK. A coiled-coil region spans residues 142-306; the sequence is QLCDLNAELK…RRRLHNQLQE (165 aa). The Kinesin motor domain maps to 310–663; that stretch reads NIRVFCRVRP…LRFASKVNQC (354 aa). Residues 325–372 form a disordered region; that stretch reads PTPPPGLLLFPSGPGGPSDPPTRLSLSRSDERRGTLSGAPAPPTRHDF. T359 carries the post-translational modification Phosphothreonine. Position 410–417 (410–417) interacts with ATP; that stretch reads GQTGSGKT.

Belongs to the TRAFAC class myosin-kinesin ATPase superfamily. Kinesin family. NCD subfamily. Binds NUBP1 and NUBP2. Interacts with PPP1R42.

The protein localises to the nucleus. Its subcellular location is the cytoplasm. It is found in the cytoskeleton. It localises to the microtubule organizing center. The protein resides in the centrosome. The protein localises to the spindle. Its subcellular location is the early endosome. Functionally, minus end-directed microtubule-dependent motor required for bipolar spindle formation. May contribute to movement of early endocytic vesicles. Regulates cilium formation and structure. This Homo sapiens (Human) protein is Kinesin-like protein KIFC1 (KIFC1).